A 210-amino-acid polypeptide reads, in one-letter code: Outer-membrane lipoprotein LolB (210 aa).

An N-terminal signal peptide occupies residues 1–18; the sequence is MKKFTKILSLSTLLFLAG. C19 carries the N-palmitoyl cysteine lipid modification. C19 is lipidated: S-diacylglycerol cysteine.

This sequence belongs to the LolB family. In terms of assembly, monomer.

The protein localises to the cell outer membrane. Its function is as follows. Plays a critical role in the incorporation of lipoproteins in the outer membrane after they are released by the LolA protein. This chain is Outer-membrane lipoprotein LolB, found in Actinobacillus pleuropneumoniae serotype 5b (strain L20).